Reading from the N-terminus, the 431-residue chain is UPF0597 protein LCA_0156 (431 aa).

The protein belongs to the UPF0597 family.

The sequence is that of UPF0597 protein LCA_0156 from Latilactobacillus sakei subsp. sakei (strain 23K) (Lactobacillus sakei subsp. sakei).